The sequence spans 348 residues: MSRQINANTPVSRRRSGLRGRRLSYSPEDAVPTPAPRFSILEARRAADRPAEERMRAWHVIGDTSEPVTLRFVHNNAQYTVHGNAPFNTADFQEERDSQETEAANRAHQRAVHLHEHLHEVQETAAPLPNYSPVHSPDLTVMEDLETPRQRFETMFHAVDAESEDEAVPLPQVDMAVFCHICSCFFTDIKNYNSSFVTTSECNHAVCFKCYTSIMFDKELFKCSMCNRATPTCRVYNHKGFVELLPTRAVRDKQAIKTHWAQLLDNNMSDSKVPEQNDVQKLQAELAELRAEMASMRAEMASKQLGATMALENRRGSSSSGASSSSTSTSSSSSSSWLWECLLNTRNY.

Over residues 1 to 11 the composition is skewed to polar residues; the sequence is MSRQINANTPV. Residues 1–32 are disordered; the sequence is MSRQINANTPVSRRRSGLRGRRLSYSPEDAVP. Residues 12–22 show a composition bias toward basic residues; it reads SRRRSGLRGRR. An RING-type zinc finger spans residues 179–227; it reads CHICSCFFTDIKNYNSSFVTTSECNHAVCFKCYTSIMFDKELFKCSMCN. A coiled-coil region spans residues 272–306; the sequence is KVPEQNDVQKLQAELAELRAEMASMRAEMASKQLG. A disordered region spans residues 312–333; that stretch reads ENRRGSSSSGASSSSTSTSSSS. Over residues 316–333 the composition is skewed to low complexity; the sequence is GSSSSGASSSSTSTSSSS.

Belongs to the alphabaculovirus IE2 protein family. Homooligomer. Post-translationally, auto-ubiquitinated.

It localises to the host nucleus. It carries out the reaction S-ubiquitinyl-[E2 ubiquitin-conjugating enzyme]-L-cysteine + [acceptor protein]-L-lysine = [E2 ubiquitin-conjugating enzyme]-L-cysteine + N(6)-ubiquitinyl-[acceptor protein]-L-lysine.. Functionally, RING-finger E3 ubiquitin ligase that plays an important regulatory role during the initial stages of infection. Migrates to specific nuclear foci early in infection supposely to prepare the sites for viral replication by targeting and ubiquitinating host proteins. The polypeptide is E3 ubiquitin-protein ligase IE2 (IE2) (Choristoneura fumiferana (Spruce budworm moth)).